Here is a 148-residue protein sequence, read N- to C-terminus: uncharacterized protein (148 aa).

The protein belongs to the SufE family.

This is an uncharacterized protein from Rhizobium etli (strain ATCC 51251 / DSM 11541 / JCM 21823 / NBRC 15573 / CFN 42).